The following is a 204-amino-acid chain: Large ribosomal subunit protein eL15 (204 aa).

This sequence belongs to the eukaryotic ribosomal protein eL15 family. In terms of assembly, component of the large ribosomal subunit.

It is found in the cytoplasm. Functionally, component of the large ribosomal subunit. The ribosome is a large ribonucleoprotein complex responsible for the synthesis of proteins in the cell. This is Large ribosomal subunit protein eL15 (rpl15) from Siniperca knerii (Big-eye mandarin fish).